Here is a 1915-residue protein sequence, read N- to C-terminus: Protein NLRC5 (1915 aa).

Residues 103–137 (LGAGEESCPGPQLYHGAKRPFQSYGSSPRRKNSKK) form a disordered region. The NACHT domain maps to 223–542 (RVTVLLGKAG…HTVDKDTLVE (320 aa)). 229–236 (GKAGMGKT) is a binding site for ATP. 27 LRR repeats span residues 622 to 646 (VAET…SFHN), 716 to 740 (MGSL…LIQT), 744 to 771 (CSQL…LLPS), 772 to 796 (LPKL…LVKV), 871 to 898 (SPQL…AASQ), 900 to 923 (HIAQ…VLKA), 930 to 953 (LEDL…PREQ), 1006 to 1033 (THNL…LLPG), 1034 to 1055 (LGPL…VFSL), 1138 to 1161 (EVQL…LPQL), 1162 to 1184 (PQLS…LLAD), 1240 to 1263 (CNAL…CLLE), 1265 to 1292 (LPQL…LLET), 1348 to 1371 (AQQL…MLLN), 1481 to 1504 (SKLL…FSQV), 1519 to 1542 (CHHL…LLMG), 1552 to 1575 (KLHL…LSRM), 1576 to 1598 (TLLQ…CLAA), 1603 to 1626 (LPEL…CLAA), 1631 to 1654 (LPEL…CLAA), 1659 to 1682 (LPEL…CLAA), 1687 to 1711 (LPEL…LVKS), 1715 to 1738 (FEHL…ELAQ), 1741 to 1768 (PPQL…ALEQ), 1769 to 1795 (CPHI…RLPL), 1821 to 1845 (FPAL…LAQV), and 1849 to 1872 (MGQL…LLAQ).

Belongs to the NLRP family. Interacts with CHUK and IKBKB; prevents CHUK and IKBKB phosphorylation and inhibits their kinase activity. Interacts with RIGI and IFIH1; blocks the interaction of MAVS to RIGI. In terms of tissue distribution, expressed in spleen, thymus and lung.

Its subcellular location is the cytoplasm. In terms of biological role, probable regulator of the NF-kappa-B and type I interferon signaling pathways. May also regulate the type II interferon signaling pathway. Plays a role in homeostatic control of innate immunity and in antiviral defense mechanisms. The sequence is that of Protein NLRC5 (Nlrc5) from Mus musculus (Mouse).